Reading from the N-terminus, the 105-residue chain is Endoribonuclease MazF1 (105 aa).

This sequence belongs to the PemK/MazF family. Forms a complex with cognate antitoxin MazE1.

Functionally, toxic component of a type II toxin-antitoxin (TA) system. Acts as an endoribonuclease on single-strand RNA, cleaving between the first and second bases in the sequence UCGCU. Neutralized by coexpression with cognate antitoxin MazE1. The sequence is that of Endoribonuclease MazF1 (mazF1) from Mycobacterium bovis (strain ATCC BAA-935 / AF2122/97).